Consider the following 556-residue polypeptide: MKGKRSEAITQGFERAPHRALLMGTGIPRKELGKPLIGIATSFTDLIPGHIGMRDLERFIEKGVHTGGGYSFLFGIPGVCDGIAMGHKGMHYSLSTRELIADMVESIAEAHRLDGLVLLTNCDKITPGMLMAAARLDIPCIVVTAGPMLTGTGRGGRRYSFVTDTFEAMARYKAGEINAAELQQCEDRACPGAGSCQGLFTANTMAILTETLGMSLVGCGTALAVSSLKRQIAFASGERIVSLVREGITPRQILTREAFENAIRVDLALGGSSNTVLHLLSIAHEAEVDLPLDLFDKLSRETPQLASMNPGGKHFMEDLDAAGGVPGVLYQLRDQIHDNPTLNGVGVKQIIDSVIDVDETVIHPKEDAVRPEGGIAILTGNLTPDGAVVKQSGVSEKMMTFEGTARCFNSEEEAMQALMGGQVKAGDVVVIRYEGPKGGPGMREMLAPTATLMGLGLGDSVALITDGRFSGGTRGPCVGHVSPEAAVGGPIALVEDGDTIVLDIPSRRLEVKVSDQELAKRRERWQAPEPKIKKGWLSRYASVVTSANTGAVCKAR.

Aspartate 81 provides a ligand contact to Mg(2+). A [2Fe-2S] cluster-binding site is contributed by cysteine 122. Aspartate 123 and lysine 124 together coordinate Mg(2+). Lysine 124 carries the N6-carboxylysine modification. Cysteine 196 serves as a coordination point for [2Fe-2S] cluster. Glutamate 444 contributes to the Mg(2+) binding site. Serine 470 (proton acceptor) is an active-site residue.

It belongs to the IlvD/Edd family. In terms of assembly, homodimer. Requires [2Fe-2S] cluster as cofactor. Mg(2+) serves as cofactor.

The catalysed reaction is (2R)-2,3-dihydroxy-3-methylbutanoate = 3-methyl-2-oxobutanoate + H2O. It catalyses the reaction (2R,3R)-2,3-dihydroxy-3-methylpentanoate = (S)-3-methyl-2-oxopentanoate + H2O. It participates in amino-acid biosynthesis; L-isoleucine biosynthesis; L-isoleucine from 2-oxobutanoate: step 3/4. The protein operates within amino-acid biosynthesis; L-valine biosynthesis; L-valine from pyruvate: step 3/4. Its function is as follows. Functions in the biosynthesis of branched-chain amino acids. Catalyzes the dehydration of (2R,3R)-2,3-dihydroxy-3-methylpentanoate (2,3-dihydroxy-3-methylvalerate) into 2-oxo-3-methylpentanoate (2-oxo-3-methylvalerate) and of (2R)-2,3-dihydroxy-3-methylbutanoate (2,3-dihydroxyisovalerate) into 2-oxo-3-methylbutanoate (2-oxoisovalerate), the penultimate precursor to L-isoleucine and L-valine, respectively. This Syntrophotalea carbinolica (strain DSM 2380 / NBRC 103641 / GraBd1) (Pelobacter carbinolicus) protein is Dihydroxy-acid dehydratase.